The sequence spans 649 residues: MDVKTYPVLEAAKNRTLLDNETYLKWYQESVADPETFWGEHGKRIDWFEPYTKVKNTTFEGDVSIKWFEDGLTNVSYNCIDRHLKAHGDKTAIIWEGDNPYLDKKITYNELYDTVCRLANVLKKHGVKKGDRVTIYMPMIPEAAYAMLACTRIGAVHSVVFGGFSPEALAGRIVDCESTFVITCDEGVRGGKPVALKENTDTAVGIAAKQNVTVGKVLVVRRTGGKVGWAPERDLWYHQETAAVEPHCPPERMNAEDPLFILYTSGSTGKPKGVLHTTGGYLVYASMTHQYVFDYQDGDIYWCTADVGWVTGHSYIVYGPLANAATTLMFEGVPNFPDAGRFWEVVDKHKVNIFYTAPTAIRSLMGAGDDFVKRSSRSSLRLLGTVGEPINPEAWEWYYHVVGDERCPVVDTWWQTETGGILITPLPGATDLKPGSATRPFFGVQPQIVDGEGNVVEGAADGNLCIIDSWPGQMRTVYGDHERFIQTYFSTYKGKYFTGDGCRRDEDGYYWITGRVDDVLNVSGHRLGTAEVESALVSHQLVSEAAVVGYPHSIKGQGIYCYVSLMAGEVGNDELRQALVKHVRSEIGPIATPDKIQFAPGLPKTRSGKIMRRILRKIAEDDFGSLGDTSTLADPSVVDDLIANRQNRA.

CoA-binding positions include 189-192 (RGGK), threonine 311, and asparagine 335. ATP is bound by residues 387-389 (GEP), 411-416 (DTWWQT), aspartate 500, and arginine 515. Serine 523 is a binding site for CoA. Arginine 526 lines the ATP pocket. Residues valine 537, histidine 539, and valine 542 each coordinate Mg(2+). CoA is bound at residue arginine 584. Lysine 609 is modified (N6-acetyllysine).

The protein belongs to the ATP-dependent AMP-binding enzyme family. It depends on Mg(2+) as a cofactor. In terms of processing, acetylated. Deacetylation by the SIR2-homolog deacetylase activates the enzyme.

The catalysed reaction is acetate + ATP + CoA = acetyl-CoA + AMP + diphosphate. Functionally, catalyzes the conversion of acetate into acetyl-CoA (AcCoA), an essential intermediate at the junction of anabolic and catabolic pathways. AcsA undergoes a two-step reaction. In the first half reaction, AcsA combines acetate with ATP to form acetyl-adenylate (AcAMP) intermediate. In the second half reaction, it can then transfer the acetyl group from AcAMP to the sulfhydryl group of CoA, forming the product AcCoA. The chain is Acetyl-coenzyme A synthetase from Sinorhizobium medicae (strain WSM419) (Ensifer medicae).